The chain runs to 374 residues: Dual-specificity RNA methyltransferase RlmN (374 aa).

The Proton acceptor role is filled by Glu91. The Radical SAM core domain maps to 97-340 (EDDRGTLCVS…TTVRKTRGDD (244 aa)). A disulfide bridge connects residues Cys104 and Cys345. Cys111, Cys115, and Cys118 together coordinate [4Fe-4S] cluster. Residues 166 to 167 (GE), Ser198, 220 to 222 (SLH), and Asn302 contribute to the S-adenosyl-L-methionine site. The active-site S-methylcysteine intermediate is the Cys345.

Belongs to the radical SAM superfamily. RlmN family. [4Fe-4S] cluster serves as cofactor.

The protein localises to the cytoplasm. The enzyme catalyses adenosine(2503) in 23S rRNA + 2 reduced [2Fe-2S]-[ferredoxin] + 2 S-adenosyl-L-methionine = 2-methyladenosine(2503) in 23S rRNA + 5'-deoxyadenosine + L-methionine + 2 oxidized [2Fe-2S]-[ferredoxin] + S-adenosyl-L-homocysteine. It carries out the reaction adenosine(37) in tRNA + 2 reduced [2Fe-2S]-[ferredoxin] + 2 S-adenosyl-L-methionine = 2-methyladenosine(37) in tRNA + 5'-deoxyadenosine + L-methionine + 2 oxidized [2Fe-2S]-[ferredoxin] + S-adenosyl-L-homocysteine. Its function is as follows. Specifically methylates position 2 of adenine 2503 in 23S rRNA and position 2 of adenine 37 in tRNAs. m2A2503 modification seems to play a crucial role in the proofreading step occurring at the peptidyl transferase center and thus would serve to optimize ribosomal fidelity. The sequence is that of Dual-specificity RNA methyltransferase RlmN from Delftia acidovorans (strain DSM 14801 / SPH-1).